Reading from the N-terminus, the 446-residue chain is D(1A) dopamine receptor (446 aa).

Residues 1-22 lie on the Extracellular side of the membrane; it reads MPLNDTTMDRRGLVVERDFSFR. Asn-4 is a glycosylation site (N-linked (GlcNAc...) asparagine). A helical transmembrane segment spans residues 23–48; it reads ILTACFLSLLILSTLLGNTLVCAAVI. Over 49–59 the chain is Cytoplasmic; that stretch reads RFRHLRSKVTN. The helical transmembrane segment at 60-86 threads the bilayer; that stretch reads FFVISLAVSDLLVAVLVMPWKAVAEIA. At 87–95 the chain is on the extracellular side; that stretch reads GFWPFGSFC. A disulfide bond links Cys-95 and Cys-185. The helical transmembrane segment at 96–118 threads the bilayer; the sequence is NIWVAFDIMCSTASILNLCVISV. Topologically, residues 119 to 137 are cytoplasmic; it reads DRYWAISSPFRYERKMTPK. Residues 138–162 form a helical membrane-spanning segment; that stretch reads AAFILISVAWTLSVLISFIPVQLNW. At 163–191 the chain is on the extracellular side; sequence HKARPLSSPDGNVSSQDETMDNCDSSLSR. The helical transmembrane segment at 192–217 threads the bilayer; sequence TYAISSSLISFYIPVAIMIVTYTRIY. The Cytoplasmic portion of the chain corresponds to 218 to 271; sequence RIAQKQIRRISALERAAVHAKNCQNTTGNGANVECSQPESSFKMSFKRETKVLK. A helical transmembrane segment spans residues 272 to 298; that stretch reads TLSVIMGVFVCCWLPFFILNCMVPFCE. Residues 299–315 lie on the Extracellular side of the membrane; sequence SDLPSGETKPFCIDSIT. The helical transmembrane segment at 316-340 threads the bilayer; that stretch reads FDVFVWFGWANSSLNPIIYAFNADF. Over 341-446 the chain is Cytoplasmic; it reads RKAFSTLLGC…PITQNGQHKT (106 aa). Residues Cys-350 and Cys-354 are each lipidated (S-palmitoyl cysteine).

The protein belongs to the G-protein coupled receptor 1 family. In terms of assembly, interacts with DNAJC14 via its C-terminus.

It is found in the cell membrane. Its subcellular location is the endoplasmic reticulum membrane. The protein localises to the cell projection. The protein resides in the cilium membrane. It localises to the dendrite. It is found in the dendritic spine. Its function is as follows. This is one of the five types (D1 to D5) of receptors for dopamine. The activity of this receptor is mediated by G proteins which activate adenylyl cyclase. The chain is D(1A) dopamine receptor (DRD1) from Didelphis virginiana (North American opossum).